The chain runs to 668 residues: MKGKTMIDRKEDNQFHLVSKYEPSGDQPQAIETLVDNIKGGEKAQILKGATGTGKTYTMSQVIQRVNKPTLVIAHNKTLAGQLYGEFKEFFPDNAVEYFVSYYDYYQPEAYVPSSDTYIEKDSSVNDEIDKLRHSATSALLERNDVIVVASVSCIYGLGSPKEYADSAVSLRPGQEISRDKLLNDLVDIQFERNDIDFQRGKFRVRGDVVEIFPASRDENAFRVEFFGDEIDRICEIESLTGRNLGEVEHLVLFPATHFMTNEEHMEEAIKNIMEEMEVQVNQFEAEGKLIEAQRIRQRTEYDVEMLREMGYTNGIENYSRHMDGRKEGEPPFTLLDFFPEDFLIMIDESHMTMGQIKGMYNGDQARKKMLVDYGFRLPSALDNRPLRREEFESHVHQIVYVSATPGDYEMEQTETVVEQIIRPTGLLDPEVEVRPTMGQMDDLLGEINARTEKGERVFVTTLTKKMAEDLTDYLKEMGVKVKYMHSDIKTLERTEIIRDLRLGVFDVLIGINLLREGIDVPEVSLVAILDADKEGFLRNERGLIQTIGRAARNSDGHVIMYADKITESMQKAMDETARRREIQMAYNKEHGITPQTIKKEIRDLISITKTNEAEVAEDTVNYSAMNKKERQEAIKKLQKQMHEAAELLDFELAAQIRDMVLELKSMD.

One can recognise a Helicase ATP-binding domain in the interval 36–276; it reads DNIKGGEKAQ…EEAIKNIMEE (241 aa). 49-56 serves as a coordination point for ATP; sequence GATGTGKT. A Beta-hairpin motif is present at residues 102–125; the sequence is YYDYYQPEAYVPSSDTYIEKDSSV. The Helicase C-terminal domain maps to 440–606; that stretch reads QMDDLLGEIN…TIKKEIRDLI (167 aa). The 36-residue stretch at 632–667 folds into the UVR domain; sequence QEAIKKLQKQMHEAAELLDFELAAQIRDMVLELKSM.

Belongs to the UvrB family. In terms of assembly, forms a heterotetramer with UvrA during the search for lesions. Interacts with UvrC in an incision complex.

The protein localises to the cytoplasm. The UvrABC repair system catalyzes the recognition and processing of DNA lesions. A damage recognition complex composed of 2 UvrA and 2 UvrB subunits scans DNA for abnormalities. Upon binding of the UvrA(2)B(2) complex to a putative damaged site, the DNA wraps around one UvrB monomer. DNA wrap is dependent on ATP binding by UvrB and probably causes local melting of the DNA helix, facilitating insertion of UvrB beta-hairpin between the DNA strands. Then UvrB probes one DNA strand for the presence of a lesion. If a lesion is found the UvrA subunits dissociate and the UvrB-DNA preincision complex is formed. This complex is subsequently bound by UvrC and the second UvrB is released. If no lesion is found, the DNA wraps around the other UvrB subunit that will check the other stand for damage. This chain is UvrABC system protein B, found in Streptococcus thermophilus (strain ATCC BAA-491 / LMD-9).